Reading from the N-terminus, the 462-residue chain is Metal cation symporter ZIP8 (462 aa).

Residues 1–19 form the signal peptide; the sequence is MAPGRAVAGLLLLAATGLG. Over 20–132 the chain is Extracellular; it reads RPSEGPELAF…PSFSEVWGYG (113 aa). Asn40, Asn88, and Asn96 each carry an N-linked (GlcNAc...) asparagine glycan. A helical transmembrane segment spans residues 133-153; sequence FLSVTIINLASLLGLILTPLI. Residues 154–160 are Cytoplasmic-facing; sequence KKSYFPK. Residues 161 to 181 traverse the membrane as a helical segment; the sequence is ILTYFVGLAIGTLFSNAIFQL. Residues 182–191 are Extracellular-facing; sequence IPEAFGFNPK. The chain crosses the membrane as a helical span at residues 192-212; sequence IDNYVEKAVAVFGGFYMLFFV. Residues 213–367 lie on the Cytoplasmic side of the membrane; sequence ERTLKMLLKT…LNAGMSTRQA (155 aa). The XEXPHE-motif motif lies at 345 to 350; sequence EEFPHE. A helical membrane pass occupies residues 368 to 388; it reads LLFNFLSACSCYVGLAFGILV. Over 389–390 the chain is Extracellular; it reads GN. The helical transmembrane segment at 391 to 411 threads the bilayer; the sequence is NFAPNIIFALAGGMFLYISLA. Topologically, residues 412 to 431 are cytoplasmic; the sequence is DMFPEMNDMLREKVTGRQTD. A helical membrane pass occupies residues 432 to 452; the sequence is FTFFMIQNAGMLTGFTAILLI. Residues 453–462 are Extracellular-facing; the sequence is TLYAGDIELQ.

This sequence belongs to the ZIP transporter (TC 2.A.5) family. As to quaternary structure, homodimer. N-glycosylated. N-glycosylation is not required for proper iron and zinc transport.

It localises to the cell membrane. The protein localises to the lysosome membrane. The protein resides in the apical cell membrane. Its subcellular location is the basolateral cell membrane. The catalysed reaction is Zn(2+)(out) + 2 hydrogencarbonate(out) = Zn(2+)(in) + 2 hydrogencarbonate(in). It catalyses the reaction selenite(out) + Zn(2+)(out) + hydrogencarbonate(out) = selenite(in) + Zn(2+)(in) + hydrogencarbonate(in). The enzyme catalyses Mn(2+)(out) + 2 hydrogencarbonate(out) = Mn(2+)(in) + 2 hydrogencarbonate(in). It carries out the reaction Fe(2+)(out) + 2 hydrogencarbonate(out) = Fe(2+)(in) + 2 hydrogencarbonate(in). The catalysed reaction is Cd(2+)(out) + 2 hydrogencarbonate(out) = Cd(2+)(in) + 2 hydrogencarbonate(in). It catalyses the reaction Co(2+)(out) + 2 hydrogencarbonate(out) = Co(2+)(in) + 2 hydrogencarbonate(in). Its function is as follows. Electroneutral divalent metal cation:bicarbonate symporter of the plasma membrane mediating the cellular uptake of zinc and manganese, two divalent metal cations important for development, tissue homeostasis and immunity. Transports an electroneutral complex composed of a divalent metal cation and two bicarbonate anions or alternatively a bicarbonate and a selenite anion. Thereby, it also contributes to the cellular uptake of selenium, an essential trace metal and micronutrient. Also imports cadmium a non-essential metal which is cytotoxic and carcinogenic. May also transport iron and cobalt through membranes. Through zinc import, indirectly regulates the metal-dependent transcription factor MTF1 and the expression of some metalloproteases involved in cartilage catabolism and also probably heart development. Also indirectly regulates the expression of proteins involved in cell morphology and cytoskeleton organization. Indirectly controls innate immune function and inflammatory response by regulating zinc cellular uptake which in turn modulates the expression of genes specific of these processes. Protects, for instance, cells from injury and death at the onset of inflammation. By regulating zinc influx into monocytes also directly modulates their adhesion to endothelial cells and arteries. Reclaims manganese from the bile at the apical membrane of hepatocytes, thereby regulating the activity of the manganese-dependent enzymes through the systemic levels of the nutrient. Also participates in manganese reabsorption in the proximal tubule of the kidney. By mediating the extracellular uptake of manganese by cells of the blood-brain barrier, may also play a role in the transport of the micronutrient to the brain. With manganese cellular uptake also participates in mitochondrial proper function. Finally, also probably functions intracellularly, translocating zinc from lysosome to cytosol to indirectly enhance the expression of specific genes during TCR-mediated T cell activation. This is Metal cation symporter ZIP8 from Rattus norvegicus (Rat).